The sequence spans 164 residues: Neurotrophin-3 (164 aa).

The N-terminal stretch at 1 to 3 (IQS) is a signal peptide. A propeptide spanning residues 4–118 (TSMDQGBLSE…GLNRTSRRKR (115 aa)) is cleaved from the precursor. Positions 89–126 (LLSENTPLEPPPLYLTEEPMGLNRTSRRKRFAEGKSHR) are disordered. A glycan (N-linked (GlcNAc...) asparagine) is linked at Asn-111.

It belongs to the NGF-beta family.

Its subcellular location is the secreted. Functionally, seems to promote the survival of visceral and proprioceptive sensory neurons. This chain is Neurotrophin-3 (NTF3), found in Cylindrophis ruffus (Red-tailed pipe snake).